A 310-amino-acid chain; its full sequence is uncharacterized protein (310 aa).

It belongs to the YiaX1 family.

This is an uncharacterized protein from Salmonella typhimurium (strain LT2 / SGSC1412 / ATCC 700720).